A 226-amino-acid polypeptide reads, in one-letter code: ATP-dependent dethiobiotin synthetase BioD (226 aa).

12–17 (GVGKTV) provides a ligand contact to ATP. A Mg(2+)-binding site is contributed by T16. K37 is an active-site residue. T41 lines the substrate pocket. Residues D49, 108–111 (EGAG), 169–170 (GS), and 197–199 (PAG) contribute to the ATP site. Residues D49 and E108 each contribute to the Mg(2+) site.

Belongs to the dethiobiotin synthetase family. As to quaternary structure, homodimer. The cofactor is Mg(2+).

It localises to the cytoplasm. The enzyme catalyses (7R,8S)-7,8-diammoniononanoate + CO2 + ATP = (4R,5S)-dethiobiotin + ADP + phosphate + 3 H(+). It participates in cofactor biosynthesis; biotin biosynthesis; biotin from 7,8-diaminononanoate: step 1/2. Functionally, catalyzes a mechanistically unusual reaction, the ATP-dependent insertion of CO2 between the N7 and N8 nitrogen atoms of 7,8-diaminopelargonic acid (DAPA, also called 7,8-diammoniononanoate) to form a ureido ring. The polypeptide is ATP-dependent dethiobiotin synthetase BioD (Mycobacterium bovis (strain BCG / Pasteur 1173P2)).